A 138-amino-acid chain; its full sequence is Ribosomal RNA large subunit methyltransferase H (138 aa).

S-adenosyl-L-methionine-binding positions include Gly86 and 105–110 (LSPLTF).

It belongs to the RNA methyltransferase RlmH family. Homodimer.

Its subcellular location is the cytoplasm. The enzyme catalyses pseudouridine(1915) in 23S rRNA + S-adenosyl-L-methionine = N(3)-methylpseudouridine(1915) in 23S rRNA + S-adenosyl-L-homocysteine + H(+). Specifically methylates the pseudouridine at position 1915 (m3Psi1915) in 23S rRNA. This chain is Ribosomal RNA large subunit methyltransferase H, found in Prochlorococcus marinus (strain MIT 9215).